Consider the following 312-residue polypeptide: Olfactory receptor 1493 (312 aa).

Residues 1–23 (MNNKTVITHFLLLGLPIPPEHQQ) lie on the Extracellular side of the membrane. N-linked (GlcNAc...) asparagine glycosylation occurs at Asn3. The helical transmembrane segment at 24 to 48 (LFFALFLIMYLTTFLGNLLIVVLVQ) threads the bilayer. At 49–55 (LDSHLHT) the chain is on the cytoplasmic side. The helical transmembrane segment at 56–77 (PMYLFLSNLSFSDLCFSSVTML) threads the bilayer. Over 78 to 98 (KLLQNIQSQVPSISYAGCLTQ) the chain is Extracellular. A disulfide bond links Cys95 and Cys187. A helical transmembrane segment spans residues 99–118 (IFFFLLFGYLGNFLLVAMAY). At 119–137 (DRYVAICFPLHYTNIMSHK) the chain is on the cytoplasmic side. The helical transmembrane segment at 138–156 (LCTCLLLVFWIMTSSHAMM) threads the bilayer. Over 157-194 (HTLLAARLSFCENNVLLNFFCDLFVLLKLACSDTYVNE) the chain is Extracellular. A helical transmembrane segment spans residues 195 to 217 (LMIHIMGVIIIVIPFVLIVISYA). Over 218-234 (KIISSILKVPSTQSIHK) the chain is Cytoplasmic. The helical transmembrane segment at 235–258 (VFSTCGSHLSVVSLFYGTIIGLYL) threads the bilayer. Over 259–270 (CPSGDNFSLKGS) the chain is Extracellular. Residues 271 to 290 (AMAMMYTVVTPMLNPFIYSL) form a helical membrane-spanning segment. Topologically, residues 291–312 (RNRDMKQALIRVTCSKKISLPW) are cytoplasmic.

It belongs to the G-protein coupled receptor 1 family. In terms of tissue distribution, olfactory epithelium.

It is found in the cell membrane. Its function is as follows. Odorant receptor. The protein is Olfactory receptor 1493 (Olr1493) of Rattus norvegicus (Rat).